The sequence spans 470 residues: MSLSRRQFIQASGIALCAGAVPLKASAAGQQQPLPVPPLLESRRGQPLFMTVQRAHWSFTPGTRASVWGINGRYLGPTIRVWKGDDVKLIYSNRLTENVSMTVAGLQVPGPLMGGPARMMSPNADWAPVLPIRQNAATLWYHANTPNRTAQQVYNGLAGMWLVEDEVSKSLPIPNHYGVDDFPVIIQDKRLDNFGTPEYNEPGSGGFVGDTLLVNGVQSPYVEVSRGWVRLRLLNASNSRRYQLQMNDGRPLHVISGDQGFLPAPVSVKQLSLAPGERREILVDMSNGDEVSITCGEAASIVDRIRGFFEPSSILVSTLVLTLRPTGLLPLVTDSLPMRLLPTEIMAGSPIRSRDISLGDDPGINGQLWDVNRIDVTAQQGTWERWTVRADEPQAFHIEGVMFQIRNVNGAMPFPEDRGWKDTVWVDGQVELLVYFGQPSWAHFPFYFNSQTLEMADRGSIGQLLVNPVP.

The tat-type signal signal peptide spans 1-27 (MSLSRRQFIQASGIALCAGAVPLKASA). One can recognise a Plastocyanin-like domain in the interval 68–164 (WGINGRYLGP…NGLAGMWLVE (97 aa)).

Belongs to the FtsP family. Exported by the Tat system. The position of the signal peptide cleavage has been experimentally proven. Can also be exported by the Sec system.

The protein resides in the periplasm. Its function is as follows. Cell division protein that is required for growth during stress conditions. May be involved in protecting or stabilizing the divisomal assembly under conditions of stress. This Escherichia coli (strain K12) protein is Cell division protein FtsP.